The chain runs to 569 residues: Urease subunit alpha (569 aa).

The region spanning 131 to 569 (GGMDAHIHYI…LPMAQRYFLF (439 aa)) is the Urease domain. Residues His136, His138, and Lys218 each coordinate Ni(2+). N6-carboxylysine is present on Lys218. Residue His220 coordinates substrate. Residues His247 and His273 each coordinate Ni(2+). The active-site Proton donor is His321. Asp361 serves as a coordination point for Ni(2+).

This sequence belongs to the metallo-dependent hydrolases superfamily. Urease alpha subunit family. In terms of assembly, heterotrimer of UreA (gamma), UreB (beta) and UreC (alpha) subunits. Three heterotrimers associate to form the active enzyme. Ni cation is required as a cofactor. Carboxylation allows a single lysine to coordinate two nickel ions.

The protein localises to the cytoplasm. The catalysed reaction is urea + 2 H2O + H(+) = hydrogencarbonate + 2 NH4(+). The protein operates within nitrogen metabolism; urea degradation; CO(2) and NH(3) from urea (urease route): step 1/1. This Agrobacterium fabrum (strain C58 / ATCC 33970) (Agrobacterium tumefaciens (strain C58)) protein is Urease subunit alpha.